The primary structure comprises 688 residues: SRSF protein kinase 2 (688 aa).

The tract at residues 1–65 (MSVNSEKSSS…EQEDPADYCK (65 aa)) is disordered. Over residues 22-43 (LVPPPPPPPPPPPPPLPDPTPP) the composition is skewed to pro residues. Residues 44–61 (EPEEEILGSDDEEQEDPA) are compositionally biased toward acidic residues. Residue serine 52 is modified to Phosphoserine. In terms of domain architecture, Protein kinase spans 81–684 (YHVIRKLGWG…ASAGECLRHP (604 aa)). Residues 87 to 95 (LGWGHFSTV) and lysine 110 contribute to the ATP site. The active-site Proton acceptor is aspartate 214. Disordered regions lie at residues 239-277 (WQKA…KKQK), 329-444 (GLEE…GRHK), and 469-501 (SVLS…TGDL). The span at 265 to 277 (SKNKKKKLKKKQK) shows a compositional bias: basic residues. Serine 380 carries the phosphoserine modification. Positions 397–421 (QLDDEDDDEEDCPNPEEYNLDEPNA) are enriched in acidic residues. Polar residues predominate over residues 423–433 (SDYTYSSSYEQ). At serine 475 the chain carries Phosphoserine. The residue at position 478 (threonine 478) is a Phosphothreonine. Serine 484, serine 486, and serine 490 each carry phosphoserine. The residue at position 492 (threonine 492) is a Phosphothreonine; by PKB/AKT1. Residues serine 494 and serine 497 each carry the phosphoserine modification. Serine 588 is modified (phosphoserine; by CK2).

Belongs to the protein kinase superfamily. CMGC Ser/Thr protein kinase family. As to quaternary structure, associates with U4/U6-U5 tri-small nuclear ribonucleoproteins (U4/U6-U5 tri-snRNPs). Interacts with PKB/AKT1 in a phosphorylation-dependent manner. The phosphorylated form (by PKB/AKT1) interacts with YWHAB and YWHAE. Interaction with YWHAB suppresses its cleavage by caspases and inhibits the release of its N-terminal pro-apoptotic fragment. Interacts with SFN. Interacts with ACIN1. Interacts with POLR2A/RNA polymerase II; the interaction occurs during the co-transcriptional formation of inappropriate R-loops. It depends on Mg(2+) as a cofactor. Phosphorylation at Thr-492 by PKB/AKT1 enhances its stimulatory activity in triggering cyclin-D1 (CCND1) expression and promoting apoptosis in neurons, which can be blocked by YWHAB. It also enhances its protein kinase activity toward ACIN1 and SRSF2, promotes its nuclear translocation and prevents its proteolytic cleavage. In terms of processing, proteolytically cleaved at Asp-139 and Asp-403 by caspase-3 during apoptotic cell death. Cleavage at Asp-139 which is the major site of cleavage, produces a small N-terminal fragment that translocates into nucleus and promotes VP16-induced apoptosis. Highly expressed in brain, moderately expressed in heart and skeletal muscle and at low levels in lung, liver, and kidney.

The protein localises to the cytoplasm. It localises to the nucleus. Its subcellular location is the nucleoplasm. It is found in the nucleus speckle. The protein resides in the chromosome. It catalyses the reaction L-seryl-[protein] + ATP = O-phospho-L-seryl-[protein] + ADP + H(+). The enzyme catalyses L-threonyl-[protein] + ATP = O-phospho-L-threonyl-[protein] + ADP + H(+). Activated by phosphorylation on Ser-52 and Ser-588. Its function is as follows. Serine/arginine-rich protein-specific kinase which specifically phosphorylates its substrates at serine residues located in regions rich in arginine/serine dipeptides, known as RS domains and is involved in the phosphorylation of SR splicing factors and the regulation of splicing. Promotes neuronal apoptosis by up-regulating cyclin-D1 (CCND1) expression. This is done by the phosphorylation of SRSF2, leading to the suppression of p53/TP53 phosphorylation thereby relieving the repressive effect of p53/TP53 on cyclin-D1 (CCND1) expression. Phosphorylates ACIN1, and redistributes it from the nuclear speckles to the nucleoplasm, resulting in cyclin A1 but not cyclin A2 up-regulation. Plays an essential role in spliceosomal B complex formation via the phosphorylation of DDX23/PRP28. Probably by phosphorylating DDX23, leads to the suppression of incorrect R-loops formed during transcription; R-loops are composed of a DNA:RNA hybrid and the associated non-template single-stranded DNA. Can mediate hepatitis B virus (HBV) core protein phosphorylation. Plays a negative role in the regulation of HBV replication through a mechanism not involving the phosphorylation of the core protein but by reducing the packaging efficiency of the pregenomic RNA (pgRNA) without affecting the formation of the viral core particles. This is SRSF protein kinase 2 from Homo sapiens (Human).